The sequence spans 362 residues: Flagellar P-ring protein (362 aa).

Positions 1-15 (MLAAALMSAAFGAHA) are cleaved as a signal peptide.

This sequence belongs to the FlgI family. In terms of assembly, the basal body constitutes a major portion of the flagellar organelle and consists of four rings (L,P,S, and M) mounted on a central rod.

It is found in the periplasm. It localises to the bacterial flagellum basal body. Assembles around the rod to form the L-ring and probably protects the motor/basal body from shearing forces during rotation. This chain is Flagellar P-ring protein, found in Pseudomonas fluorescens (strain Pf0-1).